A 439-amino-acid polypeptide reads, in one-letter code: Signal recognition particle 54 kDa protein (439 aa).

GTP is bound by residues 104-111, 184-188, and 242-245; these read GLQGSGKT, DTAGR, and SKLD.

The protein belongs to the GTP-binding SRP family. SRP54 subfamily. As to quaternary structure, part of the signal recognition particle protein translocation system, which is composed of SRP and FtsY. Archaeal SRP consists of a 7S RNA molecule of 300 nucleotides and two protein subunits: SRP54 and SRP19.

It is found in the cytoplasm. The enzyme catalyses GTP + H2O = GDP + phosphate + H(+). In terms of biological role, involved in targeting and insertion of nascent membrane proteins into the cytoplasmic membrane. Binds to the hydrophobic signal sequence of the ribosome-nascent chain (RNC) as it emerges from the ribosomes. The SRP-RNC complex is then targeted to the cytoplasmic membrane where it interacts with the SRP receptor FtsY. This is Signal recognition particle 54 kDa protein from Methanococcoides burtonii (strain DSM 6242 / NBRC 107633 / OCM 468 / ACE-M).